The primary structure comprises 286 residues: Mycolic acid methyltransferase MmaA1 (286 aa).

Residues 32–33 (YT), 71–73 (GCG), 93–98 (TLSRNH), and 122–123 (WE) each bind S-adenosyl-L-methionine. C268 is a catalytic residue.

It belongs to the CFA/CMAS family.

The protein operates within lipid metabolism; mycolic acid biosynthesis. Involved in the conversion of a cis-olefin into a trans-olefin with concomitant introduction of an allylic methyl branch at the proximal position of the precursor to both the methoxy and ketomycolic acids. It directly affects the cis- to trans ratio and indirectly affects the keto to methoxy ratio. This chain is Mycolic acid methyltransferase MmaA1 (cmaD), found in Mycobacterium bovis (strain ATCC BAA-935 / AF2122/97).